The primary structure comprises 206 residues: Tetrathionate response regulatory protein TtrR (206 aa).

The region spanning 3–117 (TIHLLDDDTA…PLQAALERAL (115 aa)) is the Response regulatory domain. D52 carries the 4-aspartylphosphate modification. The HTH luxR-type domain maps to 134–194 (QQLTPKEREL…ELIRRFEKMA (61 aa)). The H-T-H motif DNA-binding region spans 153-172 (NREIAEAMNIAVRTVEVHRA).

In terms of processing, phosphorylated by TtrS.

The protein resides in the cytoplasm. Functionally, member of the two-component regulatory system TtrR/TtrS, which is required for synthesis of tetrathionate reductase. Positively regulates transcription of the ttrBCA operon. During mice infection, the ability to use tetrathionate as an electron acceptor is a growth advantage for S.typhimurium over the competing microbiota in the lumen of the inflamed gut. In Salmonella typhimurium (strain LT2 / SGSC1412 / ATCC 700720), this protein is Tetrathionate response regulatory protein TtrR (ttrR).